The chain runs to 118 residues: Acidic phospholipase A2 CM-I (118 aa).

7 cysteine pairs are disulfide-bonded: C11-C70, C26-C117, C28-C44, C43-C98, C50-C91, C59-C84, and C77-C89. Positions 27, 29, and 31 each coordinate Ca(2+). The active site involves H47. Ca(2+) is bound at residue D48. D92 is an active-site residue.

This sequence belongs to the phospholipase A2 family. Group I subfamily. D49 sub-subfamily. Requires Ca(2+) as cofactor. As to expression, expressed by the venom gland.

The protein localises to the secreted. It carries out the reaction a 1,2-diacyl-sn-glycero-3-phosphocholine + H2O = a 1-acyl-sn-glycero-3-phosphocholine + a fatty acid + H(+). In terms of biological role, snake venom phospholipase A2 (PLA2) that causes myonecrosis when injected intramuscularly, shows indirect hemolytic activity, abolishes twitches evoked by indirect stimulation earlier than those by direct stimulation (in the mouse phrenic nerve-diaphragm preparation) but does not produce complete neuromuscular block (up to 30 ug/ml) (in the chick biventer cervicis nerve-muscle preparation). PLA2 catalyzes the calcium-dependent hydrolysis of the 2-acyl groups in 3-sn-phosphoglycerides. This is Acidic phospholipase A2 CM-I from Naja mossambica (Mozambique spitting cobra).